The chain runs to 120 residues: Large ribosomal subunit protein uL18 (120 aa).

This sequence belongs to the universal ribosomal protein uL18 family. Part of the 50S ribosomal subunit; part of the 5S rRNA/L5/L18/L25 subcomplex. Contacts the 5S and 23S rRNAs.

Functionally, this is one of the proteins that bind and probably mediate the attachment of the 5S RNA into the large ribosomal subunit, where it forms part of the central protuberance. This Chloroherpeton thalassium (strain ATCC 35110 / GB-78) protein is Large ribosomal subunit protein uL18.